A 396-amino-acid polypeptide reads, in one-letter code: Tryptophan synthase beta chain (396 aa).

Lys-86 bears the N6-(pyridoxal phosphate)lysine mark.

It belongs to the TrpB family. As to quaternary structure, tetramer of two alpha and two beta chains. It depends on pyridoxal 5'-phosphate as a cofactor.

It catalyses the reaction (1S,2R)-1-C-(indol-3-yl)glycerol 3-phosphate + L-serine = D-glyceraldehyde 3-phosphate + L-tryptophan + H2O. Its pathway is amino-acid biosynthesis; L-tryptophan biosynthesis; L-tryptophan from chorismate: step 5/5. The beta subunit is responsible for the synthesis of L-tryptophan from indole and L-serine. The chain is Tryptophan synthase beta chain from Francisella tularensis subsp. tularensis (strain FSC 198).